We begin with the raw amino-acid sequence, 425 residues long: Serine--tRNA ligase (425 aa).

L-serine is bound at residue 228–230 (TAE). ATP is bound at residue 259–261 (RSE). Position 282 (E282) interacts with L-serine. Residue 346–349 (EIAS) participates in ATP binding. S382 lines the L-serine pocket.

This sequence belongs to the class-II aminoacyl-tRNA synthetase family. Type-1 seryl-tRNA synthetase subfamily. Homodimer. The tRNA molecule binds across the dimer.

The protein resides in the cytoplasm. It carries out the reaction tRNA(Ser) + L-serine + ATP = L-seryl-tRNA(Ser) + AMP + diphosphate + H(+). The catalysed reaction is tRNA(Sec) + L-serine + ATP = L-seryl-tRNA(Sec) + AMP + diphosphate + H(+). Its pathway is aminoacyl-tRNA biosynthesis; selenocysteinyl-tRNA(Sec) biosynthesis; L-seryl-tRNA(Sec) from L-serine and tRNA(Sec): step 1/1. Its function is as follows. Catalyzes the attachment of serine to tRNA(Ser). Is also able to aminoacylate tRNA(Sec) with serine, to form the misacylated tRNA L-seryl-tRNA(Sec), which will be further converted into selenocysteinyl-tRNA(Sec). In Rickettsia massiliae (strain Mtu5), this protein is Serine--tRNA ligase.